We begin with the raw amino-acid sequence, 282 residues long: Protein FRG2-like-2 (282 aa).

Residues 1–10 (MGKGNEDPDL) are compositionally biased toward basic and acidic residues. Disordered regions lie at residues 1-96 (MGKG…QENC) and 249-282 (GPGD…LGAP). Polar residues-rich tracts occupy residues 13–31 (SSIQ…SFTE), 58–68 (RQAGSDPNPNK), and 79–94 (GNST…SYQE).

This sequence belongs to the FRG2 family.

The protein resides in the nucleus. The sequence is that of Protein FRG2-like-2 (FRG2C) from Homo sapiens (Human).